The sequence spans 402 residues: MSRVSQARNLGKYFLLVDNMLVVLGFFVVFPLISIRFVDQMGWAALMVGIALGLRQFVQQGLGVFGGAIADRFGAKPMIVTGMLLRAAGFATMGIAHDPWLLWFSCFLSGLGGTLFDPPRTALVVKLIRPRQRGRFFSLLMMQDSAGAVIGALLGSWLLQYDFRLVCATGAALFILCAAFNAWLLPAWKLSTVKAPVREGLGRVMADKRFVTYVLTLTGYYMLAVQVMLMLPIMVNDIAGSPAAVKWMYAIEACLSLTLLYPIARWSEKRFRLEHRLMAGLLVMTLSMMPIGLVSSVQQLFVLICTFYIGSIIAEPARETLGAGLADPRARGSYMGFSRLGLALGGALGYAGGGWLFDSGKAMNQSELPWVMLGVVGFITLIALWWQFSPKRSASGMLEPGA.

11 helical membrane passes run 13–33 (YFLL…FPLI), 34–54 (SIRF…ALGL), 99–116 (PWLL…GTLF), 139–159 (LLMM…SWLL), 165–185 (LVCA…AWLL), 214–234 (VLTL…LPIM), 243–263 (AAVK…LYPI), 277–297 (LMAG…VSSV), 300–320 (LFVL…ARET), 340–360 (LGLA…FDSG), and 368–388 (LPWV…WWQF).

It belongs to the major facilitator superfamily. DHA1 family. MdtH (TC 2.A.1.2.21) subfamily.

It is found in the cell inner membrane. This is Multidrug resistance protein MdtH from Enterobacter sp. (strain 638).